A 291-amino-acid polypeptide reads, in one-letter code: Nucleotide-binding protein RALTA_A0325 (291 aa).

8-15 (GISGSGKS) is a binding site for ATP. 57–60 (DIRS) is a GTP binding site.

Belongs to the RapZ-like family.

Displays ATPase and GTPase activities. The polypeptide is Nucleotide-binding protein RALTA_A0325 (Cupriavidus taiwanensis (strain DSM 17343 / BCRC 17206 / CCUG 44338 / CIP 107171 / LMG 19424 / R1) (Ralstonia taiwanensis (strain LMG 19424))).